The following is a 342-amino-acid chain: Homocysteine S-methyltransferase 4 (342 aa).

One can recognise a Hcy-binding domain in the interval 13–328 (ALRGFVREAG…ATVRAIARAV (316 aa)). Cysteine 245, cysteine 313, and cysteine 314 together coordinate Zn(2+).

In terms of assembly, monomer. It depends on Zn(2+) as a cofactor.

The catalysed reaction is S-methyl-L-methionine + L-homocysteine = 2 L-methionine + H(+). Its function is as follows. Catalyzes methyl transfer from S-methylmethionine (SMM) to adenosyl-L-homocysteine (AdoMet). SMM degradation (by HMT-1, HMT-2, HMT-3 and HMT-4) and biosynthesis (by MMT1) constitute the SMM cycle in plants, which is probably required to achieve short term control of AdoMet level. The sequence is that of Homocysteine S-methyltransferase 4 (HMT-4) from Zea mays (Maize).